Consider the following 161-residue polypeptide: Large ribosomal subunit protein uL10 (161 aa).

Belongs to the universal ribosomal protein uL10 family. As to quaternary structure, part of the ribosomal stalk of the 50S ribosomal subunit. The N-terminus interacts with L11 and the large rRNA to form the base of the stalk. The C-terminus forms an elongated spine to which L12 dimers bind in a sequential fashion forming a multimeric L10(L12)X complex.

Its function is as follows. Forms part of the ribosomal stalk, playing a central role in the interaction of the ribosome with GTP-bound translation factors. In Campylobacter curvus (strain 525.92), this protein is Large ribosomal subunit protein uL10.